A 379-amino-acid polypeptide reads, in one-letter code: uncharacterized protein (379 aa).

This sequence belongs to the herpesviridae US22 family.

This is an uncharacterized protein from Human cytomegalovirus (strain AD169) (HHV-5).